A 311-amino-acid chain; its full sequence is MQENQQITKKEQYNLNKLQKRLRRNVGEAIADFNMIEEGDRIMVCLSGGKDSYTMLEILRNLQQSAPINFSLVAVNLDQKQPGFPEHVLPEYLETLGVEYKIVEENTYGIVKEKIPEGKTTCSLCSRLRRGILYRTATELGATKIALGHHRDDILQTLFLNMFYGGKMKGMPPKLMSDDGKHIVIRPLAYCREKDIQRFADAKAFPIIPCNLCGSQPNLQRQVIADMLRDWDKRYPGRIETMFSAMQNVVPSHLCDTNLFDFKGITHGSEVVNGGDLAFDREEIPLQPSGWQPEEDENQLDELRLNVVEVK.

The PP-loop motif signature appears at 47–52 (SGGKDS). Positions 122, 125, and 213 each coordinate [4Fe-4S] cluster.

The protein belongs to the TtcA family. Homodimer. Mg(2+) is required as a cofactor. It depends on [4Fe-4S] cluster as a cofactor.

Its subcellular location is the cytoplasm. The enzyme catalyses cytidine(32) in tRNA + S-sulfanyl-L-cysteinyl-[cysteine desulfurase] + AH2 + ATP = 2-thiocytidine(32) in tRNA + L-cysteinyl-[cysteine desulfurase] + A + AMP + diphosphate + H(+). It functions in the pathway tRNA modification. In terms of biological role, catalyzes the ATP-dependent 2-thiolation of cytidine in position 32 of tRNA, to form 2-thiocytidine (s(2)C32). The sulfur atoms are provided by the cysteine/cysteine desulfurase (IscS) system. The sequence is that of tRNA-cytidine(32) 2-sulfurtransferase from Escherichia coli O45:K1 (strain S88 / ExPEC).